A 2179-amino-acid chain; its full sequence is Probable inactive serine/threonine-protein kinase lvsG (2179 aa).

Residues 100–167 (DHDLNKNKNN…TSISLNDLNS (68 aa)) form a disordered region. Composition is skewed to low complexity over residues 106–121 (NKNNNNNSEENNNNSG) and 141–159 (LSPSSSSSTSTTTTPLSTS). One copy of the WD 1 repeat lies at 216–256 (LYERSLKTSQQQQQQQQQQFKFQPNETLSLWEYFDEINSPP). Disordered stretches follow at residues 281–300 (LDNKDDDDNNNNNNNSNSQS), 523–556 (DNDNDSRDDVDNSSSSNNNNNNNNEDQSGKTVGW), 589–621 (DSMGGGIGSIGSTGGITNSSNNGGGGGSGNSGK), 778–801 (KSLKYQRQQQTQQHQQQTQQQPQF), 844–959 (NNHH…NKPS), 1033–1055 (AQQQQSQQQSQQQQANSPNSKQL), 1079–1153 (GISK…STTD), 1339–1362 (NHSNSSNNNNNNNNNNNNNNKNGS), and 1785–1807 (TTTTTTTTTTTTTNNNNENPNSL). A BEACH domain is found at 463-801 (YHQPLENQFE…QQQTQQQPQF (339 aa)). Over residues 534–548 (NSSSSNNNNNNNNED) the composition is skewed to low complexity. The span at 590–602 (SMGGGIGSIGSTG) shows a compositional bias: gly residues. Low complexity-rich tracts occupy residues 783 to 800 (QRQQQTQQHQQQTQQQPQ), 853 to 943 (NSNI…GVNN), 1033 to 1047 (AQQQQSQQQSQQQQA), and 1084 to 1098 (TTNAPTTNNTTTNSN). Positions 1021 to 1049 (LQQQLQQQQQQQAQQQQSQQQSQQQQANS) form a coiled coil. The region spanning 1064–1400 (ESMIKKYSNG…VNELLSSSLF (337 aa)) is the Protein kinase domain. Positions 1099–1122 (MGDSIGNNITSPPSPTSLKDSSSI) are enriched in polar residues. Residues 1123 to 1134 (QQQQQQQQQQQQ) show a composition bias toward low complexity. Polar residues predominate over residues 1135–1153 (NSESTRPITPPNVSNSTTD). Composition is skewed to low complexity over residues 1339 to 1360 (NHSNSSNNNNNNNNNNNNNNKN) and 1785 to 1801 (TTTTTTTTTTTTTNNNN). WD repeat units follow at residues 1864–1903 (EHNASIKSLAVSPSEERFISGSKDNLVKIWSLDSTKSLTT), 1906–1942 (QHMHTAHTVHFVSSLVASCDITSIQVWDPESKIKVNV), 1945–1983 (EPTGSFSCFEPISSKYLIASTCESTLSFYDLSMGSLTHE), 2007–2048 (SNSN…ILEQ), 2052–2089 (HHDSPVNKLIAQGSRYLISCGDKSVIQWDLHQSPPIIS), and 2149–2179 (PKQSNILSLSFFPLHHVLLAGTDDGFIKICQ).

This sequence belongs to the protein kinase superfamily. Ser/Thr protein kinase family.

The polypeptide is Probable inactive serine/threonine-protein kinase lvsG (lvsG) (Dictyostelium discoideum (Social amoeba)).